The chain runs to 116 residues: MDDPASYELDPSIAQRVKFNSAGLVPAVVQSTDGEVLMLAWMDAHALAYTIATRKGTYFSRSRNEYWIKGLTSGHTQQVTGLQLDCDGDTVLMTVVQQGGACHTGDRTCFDADVII.

Asp85 serves as a coordination point for Mg(2+). Cys86 is a Zn(2+) binding site. Asp87 and Asp89 together coordinate Mg(2+). Zn(2+) is bound by residues Cys102 and Cys109.

This sequence belongs to the PRA-CH family. As to quaternary structure, homodimer. The cofactor is Mg(2+). It depends on Zn(2+) as a cofactor.

Its subcellular location is the cytoplasm. It catalyses the reaction 1-(5-phospho-beta-D-ribosyl)-5'-AMP + H2O = 1-(5-phospho-beta-D-ribosyl)-5-[(5-phospho-beta-D-ribosylamino)methylideneamino]imidazole-4-carboxamide. It participates in amino-acid biosynthesis; L-histidine biosynthesis; L-histidine from 5-phospho-alpha-D-ribose 1-diphosphate: step 3/9. Functionally, catalyzes the hydrolysis of the adenine ring of phosphoribosyl-AMP. In Corynebacterium diphtheriae (strain ATCC 700971 / NCTC 13129 / Biotype gravis), this protein is Phosphoribosyl-AMP cyclohydrolase.